Reading from the N-terminus, the 301-residue chain is Probable alpha-L-glutamate ligase (301 aa).

Positions 104–287 constitute an ATP-grasp domain; the sequence is LQLLSRKGVG…VAGRIVSFIE (184 aa). Residues Lys141, 178 to 179, Asp187, and 211 to 213 contribute to the ATP site; these read EF and RSN. Mg(2+) contacts are provided by Asp248, Glu260, and Asn262. Residues Asp248, Glu260, and Asn262 each contribute to the Mn(2+) site.

This sequence belongs to the RimK family. It depends on Mg(2+) as a cofactor. Requires Mn(2+) as cofactor.

In Thioalkalivibrio sulfidiphilus (strain HL-EbGR7), this protein is Probable alpha-L-glutamate ligase.